Here is a 451-residue protein sequence, read N- to C-terminus: Tubulin alpha chain (451 aa).

Glutamine 11 lines the GTP pocket. Lysine 40 carries the N6-acetyllysine modification. Residues glutamate 71, glycine 144, threonine 145, threonine 179, asparagine 206, and asparagine 228 each contribute to the GTP site. Glutamate 71 lines the Mg(2+) pocket. The active site involves glutamate 254. A disordered region spans residues tyrosine 432–tyrosine 451.

Belongs to the tubulin family. As to quaternary structure, dimer of alpha and beta chains. A typical microtubule is a hollow water-filled tube with an outer diameter of 25 nm and an inner diameter of 15 nM. Alpha-beta heterodimers associate head-to-tail to form protofilaments running lengthwise along the microtubule wall with the beta-tubulin subunit facing the microtubule plus end conferring a structural polarity. Microtubules usually have 13 protofilaments but different protofilament numbers can be found in some organisms and specialized cells. Requires Mg(2+) as cofactor. Undergoes a tyrosination/detyrosination cycle, the cyclic removal and re-addition of a C-terminal tyrosine residue by the enzymes tubulin tyrosine carboxypeptidase (TTCP) and tubulin tyrosine ligase (TTL), respectively. In terms of processing, acetylation of alpha chains at Lys-40 stabilizes microtubules and affects affinity and processivity of microtubule motors. This modification has a role in multiple cellular functions, ranging from cell motility, cell cycle progression or cell differentiation to intracellular trafficking and signaling.

It is found in the cytoplasm. Its subcellular location is the cytoskeleton. It carries out the reaction GTP + H2O = GDP + phosphate + H(+). In terms of biological role, tubulin is the major constituent of microtubules, a cylinder consisting of laterally associated linear protofilaments composed of alpha- and beta-tubulin heterodimers. Microtubules grow by the addition of GTP-tubulin dimers to the microtubule end, where a stabilizing cap forms. Below the cap, tubulin dimers are in GDP-bound state, owing to GTPase activity of alpha-tubulin. The polypeptide is Tubulin alpha chain (TBA) (Daucus carota (Wild carrot)).